The primary structure comprises 84 residues: Small ribosomal subunit protein uS17 (84 aa).

It belongs to the universal ribosomal protein uS17 family. Part of the 30S ribosomal subunit.

Its function is as follows. One of the primary rRNA binding proteins, it binds specifically to the 5'-end of 16S ribosomal RNA. The polypeptide is Small ribosomal subunit protein uS17 (Caldanaerobacter subterraneus subsp. tengcongensis (strain DSM 15242 / JCM 11007 / NBRC 100824 / MB4) (Thermoanaerobacter tengcongensis)).